The sequence spans 309 residues: tRNA dimethylallyltransferase (309 aa).

ATP is bound at residue glycine 11–serine 18. A substrate-binding site is contributed by threonine 13–serine 18.

Belongs to the IPP transferase family. In terms of assembly, monomer. Mg(2+) is required as a cofactor.

The enzyme catalyses adenosine(37) in tRNA + dimethylallyl diphosphate = N(6)-dimethylallyladenosine(37) in tRNA + diphosphate. Catalyzes the transfer of a dimethylallyl group onto the adenine at position 37 in tRNAs that read codons beginning with uridine, leading to the formation of N6-(dimethylallyl)adenosine (i(6)A). This is tRNA dimethylallyltransferase from Rhodococcus jostii (strain RHA1).